Reading from the N-terminus, the 327-residue chain is uncharacterized protein (327 aa).

The helical transmembrane segment at 266–285 (IGLLAAGSVALTSLCHLLCY) threads the bilayer. Residues 297 to 327 (EEENEAAEETAAGEASAVAAAAVSEEEQQRE) form a disordered region. The segment covering 305–319 (ETAAGEASAVAAAAV) has biased composition (low complexity).

The protein belongs to the HHV-5 UL14 protein family.

It localises to the host membrane. This is an uncharacterized protein from Human cytomegalovirus (strain Merlin) (HHV-5).